We begin with the raw amino-acid sequence, 117 residues long: MEAKAVARTIRIAPRKVRLVLDLIRGKNAAEAIAILKLTNKASSPVIEKVLMSALANAEHNYDMNTDELVVKEAYANEGPTLKRFRPRAQGRASAINKRTSHITIVVSDGKEEAKEA.

Belongs to the universal ribosomal protein uL22 family. As to quaternary structure, part of the 50S ribosomal subunit.

This protein binds specifically to 23S rRNA; its binding is stimulated by other ribosomal proteins, e.g. L4, L17, and L20. It is important during the early stages of 50S assembly. It makes multiple contacts with different domains of the 23S rRNA in the assembled 50S subunit and ribosome. Functionally, the globular domain of the protein is located near the polypeptide exit tunnel on the outside of the subunit, while an extended beta-hairpin is found that lines the wall of the exit tunnel in the center of the 70S ribosome. This Staphylococcus aureus (strain USA300) protein is Large ribosomal subunit protein uL22.